Reading from the N-terminus, the 603-residue chain is Autophagy-related protein 13a (603 aa).

Phosphoserine is present on Ser-248. 2 disordered regions span residues 258 to 477 (PSPG…DDLD) and 498 to 518 (SHSL…PLGR). Residues 301–315 (ATPNQSFSPAQSHQL) are compositionally biased toward polar residues. Positions 320-331 (HDFHWSRTDAFG) are enriched in basic and acidic residues. 2 stretches are compositionally biased toward polar residues: residues 371 to 386 (IPSS…SNFS) and 419 to 437 (SSRS…PTQK). Low complexity predominate over residues 453–473 (LSSSDSPRFAFSRSPSRLSSQ).

The protein belongs to the ATG13 family. Plant subfamily. In terms of assembly, interacts with ATG1A. Interacts with ATG11 and ATG101. In terms of processing, phosphorylated during nutrient starvation. Dephosphorylated in nutrient-rich conditions.

It is found in the cytoplasmic vesicle. It localises to the autophagosome. Its function is as follows. Involved in autophagy in a nutritional condition dependent manner. The ATG1-ATG13 protein kinase complex regulates downstream events required for autophagosome enclosure and/or vacuolar delivery. Becomes a target of autophagy under nutrient starvation. Connects autophagy to plant nutritional status. The polypeptide is Autophagy-related protein 13a (Arabidopsis thaliana (Mouse-ear cress)).